Reading from the N-terminus, the 607-residue chain is Guanine nucleotide-binding protein-like 1 (607 aa).

Positions 1–14 are enriched in basic residues; sequence MPRKKPFSVKQKKK. The disordered stretch occupies residues 1–81; that stretch reads MPRKKPFSVK…GPRGYDPNRY (81 aa). Residues 15–26 show a composition bias toward basic and acidic residues; sequence QLQDKRERKRGL. Residues S32, S33, and S34 each carry the phosphoserine modification. 2 positions are modified to phosphothreonine: T48 and T50. Residues S51 and S68 each carry the phosphoserine modification. Positions 178-418 constitute a CP-type G domain; sequence WRQLWRVLEM…LCDCPGLIFP (241 aa). Position 225–228 (225–228) interacts with GTP; sequence NKVD. Phosphoserine is present on S324. Residues 367–374 and 411–415 each bind GTP; these read GFPNVGKS and DCPGL. A disordered region spans residues 544–607; sequence GRVGPAGDEE…PYALLGEGEC (64 aa). Acidic residues predominate over residues 550-585; sequence GDEEEEEEEELSSSCEEEGEEDRDADEEGEGDEDTP. Phosphoserine is present on residues S561, S562, and S563.

Belongs to the TRAFAC class YlqF/YawG GTPase family.

Functionally, possible regulatory or functional link with the histocompatibility cluster. The sequence is that of Guanine nucleotide-binding protein-like 1 (Gnl1) from Rattus norvegicus (Rat).